A 311-amino-acid chain; its full sequence is Replicative helicase loader DnaI (311 aa).

The interval 1-136 is N-terminal domain (Nd); the sequence is MEPIGRSLQG…LGATFQQVDI (136 aa). Zn(2+) is bound by residues Cys-67, Cys-70, His-84, and Cys-101. A C-terminal domain (Cd) region spans residues 137-311; that stretch reads SDPSRLAMFQ…RLDGENRRHP (175 aa). 168 to 175 lines the ATP pocket; the sequence is GKFGVGKT.

The protein belongs to the DnaI family. As to quaternary structure, the DNA replisome assembles sequentially on oriC in this order; DnaA, DnaD, DnaB, DnaI-DnaC helicase. Monomer with a very minor amount of dimer in solution. Interacts with replicative helicase (from G.stearothermophilus, called DnaB); this interaction is disrupted by DnaD. Interacts with replicative helicase DnaC, forms a DnaC(6):DnaI(6) complex. Interacts with the helicase as 3 dimers. A stable complex with DnaG primase, DnaI(6):helicase(6):DnaG(3) fragment can be isolated; DnaI and DnaG do not contact each other (helicase and DnaG in this complex are derived from G.stearothermophilus). It depends on Zn(2+) as a cofactor.

The protein resides in the cytoplasm. The catalysed reaction is ATP + H2O = ADP + phosphate + H(+). Functionally, helps load the DnaC replicative helicase onto single-stranded (ss)DNA and simulates the helicase activity; in the presence of DnaB more helicase activity is seen. Regulates DnaC helicase activity, at low concentrations stimulates the DNA helicase and ATPase activities of DnaC. Has no measurable ATPase activity after 1 hour incubation of 6 uM DnaI with or without DNA. Another group has found the protein has weak ATPase activity that is not stimulated by ssDNA. Whole protein binds forked DNA (but not ssDNA) weakly; ATP and ADPNP (probably 5'-adenylyl beta, gamma-imidodiphosphate) have no effect on DNA binding. DnaB, DnaD and DnaI may be required for a PriA-independent pathway of replication fork restart. The sequence is that of Replicative helicase loader DnaI from Bacillus subtilis (strain 168).